A 346-amino-acid chain; its full sequence is tRNA N6-adenosine threonylcarbamoyltransferase (346 aa).

The Fe cation site is built by histidine 111 and histidine 115. Residues 134-138, aspartate 167, glycine 180, and asparagine 279 each bind substrate; that span reads LVSGG. Aspartate 307 contributes to the Fe cation binding site.

It belongs to the KAE1 / TsaD family. The cofactor is Fe(2+).

The protein localises to the cytoplasm. The catalysed reaction is L-threonylcarbamoyladenylate + adenosine(37) in tRNA = N(6)-L-threonylcarbamoyladenosine(37) in tRNA + AMP + H(+). Functionally, required for the formation of a threonylcarbamoyl group on adenosine at position 37 (t(6)A37) in tRNAs that read codons beginning with adenine. Is involved in the transfer of the threonylcarbamoyl moiety of threonylcarbamoyl-AMP (TC-AMP) to the N6 group of A37, together with TsaE and TsaB. TsaD likely plays a direct catalytic role in this reaction. This is tRNA N6-adenosine threonylcarbamoyltransferase from Burkholderia vietnamiensis (strain G4 / LMG 22486) (Burkholderia cepacia (strain R1808)).